The sequence spans 592 residues: A-type ATP synthase subunit A (592 aa).

233–240 (GPFGSGKT) lines the ATP pocket.

The protein belongs to the ATPase alpha/beta chains family. As to quaternary structure, has multiple subunits with at least A(3), B(3), C, D, E, F, H, I and proteolipid K(x).

The protein localises to the cell membrane. The enzyme catalyses ATP + H2O + 4 H(+)(in) = ADP + phosphate + 5 H(+)(out). Functionally, component of the A-type ATP synthase that produces ATP from ADP in the presence of a proton gradient across the membrane. The A chain is the catalytic subunit. The protein is A-type ATP synthase subunit A of Saccharolobus islandicus (strain Y.N.15.51 / Yellowstone #2) (Sulfolobus islandicus).